Reading from the N-terminus, the 36-residue chain is Beta-amanitin proprotein (36 aa).

Positions Met-1–Pro-10 are excised as a propeptide. A cross-link (cyclopeptide (Ile-Pro)) is located at residues Ile-11–Pro-18. Positions Trp-12 to Cys-16 form a cross-link, 2'-cysteinyl-6'-hydroxytryptophan sulfoxide (Trp-Cys). Positions Cys-19–Cys-36 are excised as a propeptide.

This sequence belongs to the MSDIN fungal toxin family. In terms of processing, processed by the macrocyclase-peptidase enzyme POPB to yield a toxic cyclic decapeptide. POPB first removes 10 residues from the N-terminus. Conformational trapping of the remaining peptide forces the enzyme to release this intermediate rather than proceed to macrocyclization. The enzyme rebinds the remaining peptide in a different conformation and catalyzes macrocyclization of the N-terminal 8 residues.

Its function is as follows. Toxin belonging to the bicyclic octapeptides amatoxins that acts by binding non-competitively to RNA polymerase II and greatly slowing the elongation of transcripts from target promoters. In Amanita phalloides (Death cap), this protein is Beta-amanitin proprotein.